The sequence spans 214 residues: Adenylate kinase (214 aa).

10 to 15 (GAGKGT) is a binding site for ATP. The segment at 30-59 (STGDMLRAAVKAGTPLGVKAQEIMIQGGLV) is NMP. Residues threonine 31, arginine 36, 57-59 (GLV), 85-88 (GFPR), and glutamine 92 each bind AMP. The LID stretch occupies residues 126 to 163 (GRRSCSSCGKGYHLVFDPPLRAGVCDVCGSGLVQRADD). ATP is bound at residue arginine 127. Residues cysteine 130, cysteine 133, cysteine 150, and cysteine 153 each coordinate Zn(2+). Arginine 160 and arginine 171 together coordinate AMP. An ATP-binding site is contributed by glycine 199.

The protein belongs to the adenylate kinase family. As to quaternary structure, monomer.

The protein resides in the cytoplasm. It carries out the reaction AMP + ATP = 2 ADP. It functions in the pathway purine metabolism; AMP biosynthesis via salvage pathway; AMP from ADP: step 1/1. In terms of biological role, catalyzes the reversible transfer of the terminal phosphate group between ATP and AMP. Plays an important role in cellular energy homeostasis and in adenine nucleotide metabolism. In Trichlorobacter lovleyi (strain ATCC BAA-1151 / DSM 17278 / SZ) (Geobacter lovleyi), this protein is Adenylate kinase.